Consider the following 215-residue polypeptide: Adenylate kinase (215 aa).

An ATP-binding site is contributed by 10-15 (GAGKGT). Residues 30–59 (STGDMFRAAIKDQTPLGQEAKSYMDKGELV) are NMP. AMP-binding positions include T31, R36, 57–59 (ELV), 85–88 (GFPR), and Q92. The LID stretch occupies residues 126 to 163 (GRRICPTCGATYHVIYNPPKVEGVCDIDGSALVQREDD). R127 contacts ATP. Zn(2+) contacts are provided by C130 and C133. 136-137 (TY) serves as a coordination point for ATP. 2 residues coordinate Zn(2+): C150 and D153. The AMP site is built by R160 and R171. Position 199 (R199) interacts with ATP.

It belongs to the adenylate kinase family. Monomer.

It is found in the cytoplasm. The enzyme catalyses AMP + ATP = 2 ADP. It functions in the pathway purine metabolism; AMP biosynthesis via salvage pathway; AMP from ADP: step 1/1. Functionally, catalyzes the reversible transfer of the terminal phosphate group between ATP and AMP. Plays an important role in cellular energy homeostasis and in adenine nucleotide metabolism. The chain is Adenylate kinase from Exiguobacterium sibiricum (strain DSM 17290 / CCUG 55495 / CIP 109462 / JCM 13490 / 255-15).